The following is a 310-amino-acid chain: Protein RL1 (310 aa).

Polar residues predominate over residues 1–12; sequence MPATDTNSTHTT. The interval 1-44 is disordered; it reads MPATDTNSTHTTPLHPEDQHTLPLHHSTTQPHVQTSDKHADKQH. Positions 35 to 44 are enriched in basic and acidic residues; that stretch reads TSDKHADKQH. The segment at 153–159 is involved in the interaction with host DDB1; that stretch reads LLLARQR. Residues 205–252 form a disordered region; it reads ERPSAGEAQARGLLPRIRITPISTSPRPKPPQPTTSTASHPHATARPD. The segment covering 238 to 248 has biased composition (low complexity); sequence TTSTASHPHAT.

It belongs to the HHV-5 HKLF1 family. As to quaternary structure, interacts with host adaptor protein DDB1; this interaction allows RL1 to recruit the cullin4-RING E3 ubiquitin ligase (CRL4) complex and promote SLN11 degradation.

In terms of biological role, degrades the host antiviral factor SLFN11 via the cullin4-RING E3 ubiquitin ligase (CRL4) complex. The polypeptide is Protein RL1 (RL1) (Human cytomegalovirus (strain Merlin) (HHV-5)).